The chain runs to 614 residues: uncharacterized protein (614 aa).

This is an uncharacterized protein from Archaeoglobus fulgidus (strain ATCC 49558 / DSM 4304 / JCM 9628 / NBRC 100126 / VC-16).